Consider the following 445-residue polypeptide: Glycine--tRNA ligase (445 aa).

Positions 97 and 145 each coordinate substrate. ATP-binding positions include 177–179 (RNE), 187–192 (FRTCEF), 262–263 (EI), and 308–311 (GLTR). Residue 192–196 (FEQME) participates in substrate binding. 304 to 308 (ETSLG) contacts substrate.

This sequence belongs to the class-II aminoacyl-tRNA synthetase family. As to quaternary structure, homodimer.

It is found in the cytoplasm. It catalyses the reaction tRNA(Gly) + glycine + ATP = glycyl-tRNA(Gly) + AMP + diphosphate. Catalyzes the attachment of glycine to tRNA(Gly). This is Glycine--tRNA ligase from Borrelia hermsii (strain HS1 / DAH).